A 24-amino-acid chain; its full sequence is Protein YsdE (24 aa).

The protein is Protein YsdE of Escherichia coli (strain K12).